The primary structure comprises 181 residues: Regulator of G-protein signaling 10 (181 aa).

The tract at residues 1–32 (MFNRAVSRLSRKRPPSDIHDSDGSSSSSHQSL) is disordered. Residues 23 to 32 (GSSSSSHQSL) are compositionally biased toward low complexity. A phosphoserine mark is found at serine 24 and serine 41. The RGS domain maps to 41–156 (SLENLLEDPE…LKSDLFLKHK (116 aa)). A lipid anchor (S-palmitoyl cysteine) is attached at cysteine 74. Residues 158 to 181 (TEEEEEDLPDAQTAAKRASRIYNT) form a disordered region. Phosphoserine is present on serine 176.

In terms of assembly, interacts with GNAZ, GNAI1 and GNAI3. Associates specifically with the activated, GTP-bound forms of GNAZ and GNAI3.

It is found in the cytoplasm. The protein resides in the cytosol. It localises to the nucleus. In terms of biological role, regulates G protein-coupled receptor signaling cascades, including signaling downstream of the muscarinic acetylcholine receptor CHRM2. Inhibits signal transduction by increasing the GTPase activity of G protein alpha subunits, thereby driving them into their inactive GDP-bound form. Modulates the activity of potassium channels that are activated in response to CHRM2 signaling. Activity on GNAZ is inhibited by palmitoylation of the G-protein. The protein is Regulator of G-protein signaling 10 (RGS10) of Homo sapiens (Human).